The chain runs to 374 residues: Pectate lyase 3 (374 aa).

Positions 1 to 22 are cleaved as a signal peptide; sequence MKYLLPSAAAGLLLLAAQPTMA. Cysteine 93 and cysteine 176 are oxidised to a cystine. Positions 150, 152, 187, and 191 each coordinate Ca(2+). Arginine 239 is an active-site residue. An intrachain disulfide couples cysteine 350 to cysteine 373.

This sequence belongs to the polysaccharide lyase 1 family. PLADES subfamily. The cofactor is Ca(2+).

The protein resides in the secreted. It catalyses the reaction Eliminative cleavage of (1-&gt;4)-alpha-D-galacturonan to give oligosaccharides with 4-deoxy-alpha-D-galact-4-enuronosyl groups at their non-reducing ends.. Its pathway is glycan metabolism; pectin degradation; 2-dehydro-3-deoxy-D-gluconate from pectin: step 2/5. Involved in maceration and soft-rotting of plant tissue. This is Pectate lyase 3 (pel3) from Pectobacterium carotovorum (Erwinia carotovora).